The following is an 84-amino-acid chain: GTP cyclohydrolase 1 feedback regulatory protein (84 aa).

Belongs to the GFRP family. In terms of assembly, homopentamer. Forms a complex with GCH1 where a GCH1 homodecamer is sandwiched by two GFRP homopentamers.

It is found in the nucleus. Its subcellular location is the nucleus membrane. The protein resides in the cytoplasm. The protein localises to the cytosol. Functionally, mediates tetrahydrobiopterin inhibition of GTP cyclohydrolase 1. In Xenopus laevis (African clawed frog), this protein is GTP cyclohydrolase 1 feedback regulatory protein (gchfr).